Reading from the N-terminus, the 492-residue chain is GTPase Obg (492 aa).

The Obg domain occupies 2–159; that stretch reads PRFVDRVVIH…RELTLELKTV (158 aa). The OBG-type G domain occupies 160–340; that stretch reads ADVGLIGFPS…LIFGLWQMIS (181 aa). GTP is bound by residues 166 to 173, 191 to 195, 212 to 215, 292 to 295, and 321 to 323; these read GFPSAGKS, FTTLV, DVPG, NKID, and STV. The Mg(2+) site is built by serine 173 and threonine 193. The OCT domain maps to 358–438; it reads PVPVDDSGFR…IGDMTFDWEP (81 aa). Residues 449 to 492 form a disordered region; sequence SGRGTDARLERTERVGAAERKAARRQRRTGDDAERGTTERGENT. Composition is skewed to basic and acidic residues over residues 453-469 and 476-492; these read TDAR…AERK and RTGD…GENT.

Belongs to the TRAFAC class OBG-HflX-like GTPase superfamily. OBG GTPase family. In terms of assembly, monomer. Mg(2+) serves as cofactor.

The protein resides in the cytoplasm. In terms of biological role, an essential GTPase which binds GTP, GDP and possibly (p)ppGpp with moderate affinity, with high nucleotide exchange rates and a fairly low GTP hydrolysis rate. Plays a role in control of the cell cycle, stress response, ribosome biogenesis and in those bacteria that undergo differentiation, in morphogenesis control. The chain is GTPase Obg from Mycobacterium avium (strain 104).